Here is a 1464-residue protein sequence, read N- to C-terminus: DNA-directed RNA polymerase subunit beta' (1464 aa).

Zn(2+)-binding residues include cysteine 66, cysteine 68, cysteine 96, and cysteine 99. 3 residues coordinate Mg(2+): aspartate 491, aspartate 493, and aspartate 495. Zn(2+)-binding residues include cysteine 838, cysteine 912, cysteine 919, and cysteine 922. Positions 1143 to 1200 are enriched in acidic residues; it reads NDDDDDDYYDSDYYDYYDYSDDDDDYDDYDDYYYNYDDDENDNDNDYDYDYDYDYDYD. The segment at 1143–1229 is disordered; it reads NDDDDDDYYD…YDYDYDSDSD (87 aa). Low complexity predominate over residues 1204–1219; the sequence is HNSYSHNSYSPSSNDN. Residues 1220–1229 are compositionally biased toward acidic residues; the sequence is YDYDYDSDSD.

Belongs to the RNA polymerase beta' chain family. As to quaternary structure, the RNAP catalytic core consists of 2 alpha, 1 beta, 1 beta' and 1 omega subunit. When a sigma factor is associated with the core the holoenzyme is formed, which can initiate transcription. The cofactor is Mg(2+). Zn(2+) is required as a cofactor.

It catalyses the reaction RNA(n) + a ribonucleoside 5'-triphosphate = RNA(n+1) + diphosphate. DNA-dependent RNA polymerase catalyzes the transcription of DNA into RNA using the four ribonucleoside triphosphates as substrates. The sequence is that of DNA-directed RNA polymerase subunit beta' from Karelsulcia muelleri (strain GWSS) (Sulcia muelleri).